Here is a 198-residue protein sequence, read N- to C-terminus: Pyridoxine/pyridoxamine 5'-phosphate oxidase 2 (198 aa).

FMN-binding positions include Arg-42, Asn-59 to Thr-60, Lys-66, and Arg-121 to Ser-122.

It belongs to the pyridoxamine 5'-phosphate oxidase family. As to quaternary structure, homodimer. It depends on FMN as a cofactor.

It catalyses the reaction pyridoxamine 5'-phosphate + O2 + H2O = pyridoxal 5'-phosphate + H2O2 + NH4(+). The enzyme catalyses pyridoxine 5'-phosphate + O2 = pyridoxal 5'-phosphate + H2O2. The protein operates within cofactor metabolism; pyridoxal 5'-phosphate salvage; pyridoxal 5'-phosphate from pyridoxamine 5'-phosphate: step 1/1. It functions in the pathway cofactor metabolism; pyridoxal 5'-phosphate salvage; pyridoxal 5'-phosphate from pyridoxine 5'-phosphate: step 1/1. Its function is as follows. Catalyzes the oxidation of either pyridoxine 5'-phosphate (PNP) or pyridoxamine 5'-phosphate (PMP) into pyridoxal 5'-phosphate (PLP). Has an in vitro catalytic efficiency for PNP approximately 300-fold lower than that of PPOX1. The chain is Pyridoxine/pyridoxamine 5'-phosphate oxidase 2 (PPOX2) from Arabidopsis thaliana (Mouse-ear cress).